A 152-amino-acid chain; its full sequence is Transcriptional regulator MraZ (152 aa).

2 consecutive SpoVT-AbrB domains span residues 5–52 (VTSI…PLHE) and 81–124 (ATEC…QDKQ).

Belongs to the MraZ family. Forms oligomers.

It is found in the cytoplasm. It localises to the nucleoid. The protein is Transcriptional regulator MraZ of Actinobacillus pleuropneumoniae serotype 3 (strain JL03).